Here is a 333-residue protein sequence, read N- to C-terminus: Electron transfer flavoprotein subunit alpha, mitochondrial (333 aa).

The transit peptide at 1–19 (MFRAAAPGQLRRAASLLRF) directs the protein to the mitochondrion. Residues 20-204 (QSTLVIAEHA…GISEWLDQKL (185 aa)) form a domain I region. Lysine 59 is subject to N6-acetyllysine; alternate. Lysine 59 bears the N6-succinyllysine; alternate mark. Lysine 62 is subject to N6-acetyllysine. An N6-acetyllysine; alternate modification is found at lysine 69. An N6-succinyllysine; alternate modification is found at lysine 69. Lysine 75 bears the N6-acetyllysine mark. An N6-acetyllysine; alternate modification is found at lysine 85. Lysine 85 carries the N6-succinyllysine; alternate modification. A Phosphothreonine modification is found at threonine 93. N6-acetyllysine occurs at positions 101 and 139. At serine 140 the chain carries Phosphoserine. Lysine 158 carries the post-translational modification N6-acetyllysine; alternate. Lysine 158 carries the post-translational modification N6-succinyllysine; alternate. At lysine 164 the chain carries N6-acetyllysine. At lysine 187 the chain carries N6-succinyllysine. Lysine 203 carries the N6-acetyllysine; alternate modification. At lysine 203 the chain carries N6-succinyllysine; alternate. The domain II stretch occupies residues 205–333 (TKSDRPELTG…PEMTEILKKK (129 aa)). Lysine 216 bears the N6-succinyllysine mark. Arginine 223 contacts FAD. Residues lysine 226 and lysine 232 each carry the N6-acetyllysine; alternate modification. 2 positions are modified to N6-succinyllysine; alternate: lysine 226 and lysine 232. Residues serine 248, 263–266 (VGQT), 281–286 (SGAIQH), and asparagine 300 each bind FAD. Lysine 301 is modified (N6-succinyllysine). 318–319 (DL) lines the FAD pocket.

Belongs to the ETF alpha-subunit/FixB family. As to quaternary structure, heterodimer composed of ETFA and ETFB. Identified in a complex that contains ETFA, ETFB and ETFRF1. Interaction with ETFRF1 promotes dissociation of the bound FAD and loss of electron transfer activity. Interacts with TASOR. It depends on FAD as a cofactor. In terms of tissue distribution, expressed in the spermatogonia, spermatocytes, ovary and granular cells within the cerebellum.

It is found in the mitochondrion matrix. Heterodimeric electron transfer flavoprotein that accepts electrons from several mitochondrial dehydrogenases, including acyl-CoA dehydrogenases, glutaryl-CoA and sarcosine dehydrogenase. It transfers the electrons to the main mitochondrial respiratory chain via ETF-ubiquinone oxidoreductase (ETF dehydrogenase). Required for normal mitochondrial fatty acid oxidation and normal amino acid metabolism. This is Electron transfer flavoprotein subunit alpha, mitochondrial (Etfa) from Mus musculus (Mouse).